Reading from the N-terminus, the 207-residue chain is Small ribosomal subunit protein uS4 (207 aa).

The 67-residue stretch at 98–164 (RRLDNVVYRM…AKFKNLVEVN (67 aa)) folds into the S4 RNA-binding domain.

Belongs to the universal ribosomal protein uS4 family. Part of the 30S ribosomal subunit. Contacts protein S5. The interaction surface between S4 and S5 is involved in control of translational fidelity.

In terms of biological role, one of the primary rRNA binding proteins, it binds directly to 16S rRNA where it nucleates assembly of the body of the 30S subunit. With S5 and S12 plays an important role in translational accuracy. The chain is Small ribosomal subunit protein uS4 from Clostridioides difficile (strain 630) (Peptoclostridium difficile).